The following is a 137-amino-acid chain: Large ribosomal subunit protein uL16 (137 aa).

This sequence belongs to the universal ribosomal protein uL16 family. In terms of assembly, part of the 50S ribosomal subunit.

Binds 23S rRNA and is also seen to make contacts with the A and possibly P site tRNAs. In Streptococcus thermophilus (strain ATCC BAA-491 / LMD-9), this protein is Large ribosomal subunit protein uL16.